The primary structure comprises 113 residues: Pro-FMRFamide-related neuropeptide FF (113 aa).

Positions Met1–Cys20 are cleaved as a signal peptide. A propeptide spanning residues Ala21 to Arg65 is cleaved from the precursor. The segment at Glu22–Thr48 is disordered. Phe76 carries the phenylalanine amide modification. A propeptide spanning residues Asn79–Arg92 is cleaved from the precursor. Position 110 is a phenylalanine amide (Phe110).

It belongs to the FARP (FMRFamide related peptide) family.

It is found in the secreted. Functionally, morphine modulating peptides. Have wide-ranging physiologic effects, including the modulation of morphine-induced analgesia, elevation of arterial blood pressure, and increased somatostatin secretion from the pancreas. Neuropeptide FF potentiates and sensitizes ASIC1 and ASIC3 channels. The polypeptide is Pro-FMRFamide-related neuropeptide FF (Homo sapiens (Human)).